Reading from the N-terminus, the 820-residue chain is Leucine-rich repeat and guanylate kinase domain-containing protein (820 aa).

Over residues 72-83 (EAEAEQEEKQQE) the composition is skewed to basic and acidic residues. The segment at 72-96 (EAEAEQEEKQQEDGESEESEESEMQ) is disordered. A compositionally biased stretch (acidic residues) spans 84-94 (DGESEESEESE). 9 LRR repeats span residues 129-149 (YLNL…CGYV), 150-171 (HLQK…SCMP), 172-193 (YLLE…KPPQ), 194-215 (NLKK…SAYH), 216-237 (TLTQ…ENCI), 238-259 (SLTH…GTLP), 260-280 (IKVL…EELK), 281-302 (ALQN…ENHD), and 303-324 (LLEV…EYIE). The LRRCT domain occupies 337–375 (NPIQTKPEYWFFVIYMLLRLTELDQQKIKVEEKVFAVNK). A Guanylate kinase-like domain is found at 414 to 597 (YPMLILTGPA…AYQKLSELIR (184 aa)). Position 421–428 (421–428 (GPAACGKR)) interacts with ATP. The tract at residues 800-820 (TIMDPGSNTKPTLPPIPHGRR) is disordered. The segment covering 811-820 (TLPPIPHGRR) has biased composition (pro residues).

As to quaternary structure, interacts (via guanylate kinase-like domain) with RIMBP3 (via coiled-coil region). Interacts (via guanylate kinase-like domain) with HOOK2. Interacts (via LRRCT domain) with KLC3. Interacts with HOOK1 and HOOK3. Highly expressed in the testis. During spermatid development is initially localized to a supra-nuclear region of round spermatids, and is particularly evident at the leading edge of the developing acrosome and acroplaxome. As maturation proceeded and nuclear elongation initiated, LRGUK moves distally to ultimately reside on the microtubules of the manchette. LRGUK is also evident in the sperm basal body and the sperm tail.

The protein localises to the cytoplasmic vesicle. The protein resides in the secretory vesicle. It localises to the acrosome. Its subcellular location is the cytoplasm. It is found in the cytoskeleton. The protein localises to the cilium basal body. Involved in multiple aspects of sperm assembly including acrosome attachment, shaping of the sperm head and in the early aspects of axoneme development. Not essential for primary cilium biogenesis. This chain is Leucine-rich repeat and guanylate kinase domain-containing protein (Lrguk), found in Mus musculus (Mouse).